The chain runs to 534 residues: Serine protease vicPa (534 aa).

The first 17 residues, methionine 1–glycine 17, serve as a signal peptide directing secretion. 2 N-linked (GlcNAc...) asparagine glycosylation sites follow: asparagine 65 and asparagine 126. Serine 174 (charge relay system) is an active-site residue. N-linked (GlcNAc...) asparagine glycosylation is found at asparagine 297, asparagine 416, and asparagine 436. The Charge relay system role is filled by aspartate 450.

This sequence belongs to the peptidase S28 family.

It participates in mycotoxin biosynthesis. Functionally, serine protease, part of the gene cluster that mediates the biosynthesis of the secondary metabolite victorin, the molecular basis for Victoria blight of oats. Within the pathway, vicPa and vicPb are probably involved in the processing of the vicA1 and vicA2 precursors. The pathway starts with the processing of the precursor vicA1 by several endopeptidases including kexin proteases as well as the cluster-specific S28 family peptidases vicPa and vicPb to produce 7 identical copies of the hexapeptide Gly-Leu-Lys-Leu-Ala-Phe. After being excised from the precursor peptide, the core peptides are cyclized and modified post-translationally by enzymes encoded within the gene cluster. The ustYa family oxidase vicYb is required for the formation of the macrocycle in victorin and the copper amine oxidases (CAOs) vicK1 and vicK2 are responsible for converting victorin to the active form by oxidizing the N-terminal glycyl residue in the peptides to glyoxylate. Relaxed substrate specificity of enzymes in the victorin biosynthetic pathway results in a metabolic grid that produces a set of analogs including victorinines B, C, E or HV-toxin M. This is Serine protease vicPa from Bipolaris victoriae (strain FI3) (Victoria blight of oats agent).